Consider the following 244-residue polypeptide: Transforming protein v-Fos/v-Fox (244 aa).

The tract at residues 1 to 236 (DSLSYYHSPA…LFPASSGHSG (236 aa)) is transforming protein v-Fos. The bZIP domain maps to 113–176 (EVKRRIRRER…EKLEFILAAH (64 aa)). The segment at 115–135 (KRRIRRERNKMAAAKCRNRRR) is basic motif. The tract at residues 141 to 169 (LQAETDQLEDEKSALQTEIANLLKEKEKL) is leucine-zipper. The interval 237 to 244 (FISMAGWQ) is transforming protein v-Fox.

This sequence belongs to the bZIP family. Fos subfamily.

Its subcellular location is the host nucleus. This chain is Transforming protein v-Fos/v-Fox (FOS-FOX), found in Mus musculus (Mouse).